A 265-amino-acid polypeptide reads, in one-letter code: Photosystem II 22 kDa protein, chloroplastic (265 aa).

Residues 1-59 (MAQTMLLTSGVTAGHFLRNKSPLAQPKVHHLFLSGNSPVALPSRRQSFVPLALFKPKTK) constitute a chloroplast transit peptide. A run of 2 repeats spans residues 54–158 (FKPK…FVDD) and 159–264 (PPTG…DGEE). Helical transmembrane passes span 96-116 (VAMIGFAASLLGEALTGKGIL), 130-150 (AEPLLLFFILFTLLGAIGALG), 195-215 (LFVGRLAQLGIAFSLIGEIIT), and 229-249 (IPIQDIEPLVLLNVAFFFFAA).

This sequence belongs to the ELIP/psbS family.

The protein localises to the plastid. Its subcellular location is the chloroplast thylakoid membrane. Functionally, plays an important role in non-photochemical quenching (NPQ), a process maintains the balance between dissipation and utilization of light energy to minimize generation of oxidizing molecules, thereby protecting the plant against photo-oxidative damage; acts upstream of DLDG1. Is not necessary for efficient light harvesting and photosynthesis. In Arabidopsis thaliana (Mouse-ear cress), this protein is Photosystem II 22 kDa protein, chloroplastic.